A 364-amino-acid chain; its full sequence is tRNA 2-selenouridine synthase (364 aa).

Residues 14-137 (LIADTPIIDV…LRQTTIQATI (124 aa)) form the Rhodanese domain. Residue C97 is the S-selanylcysteine intermediate of the active site.

This sequence belongs to the SelU family. As to quaternary structure, monomer.

It carries out the reaction 5-methylaminomethyl-2-thiouridine(34) in tRNA + selenophosphate + (2E)-geranyl diphosphate + H2O + H(+) = 5-methylaminomethyl-2-selenouridine(34) in tRNA + (2E)-thiogeraniol + phosphate + diphosphate. The enzyme catalyses 5-methylaminomethyl-2-thiouridine(34) in tRNA + (2E)-geranyl diphosphate = 5-methylaminomethyl-S-(2E)-geranyl-thiouridine(34) in tRNA + diphosphate. It catalyses the reaction 5-methylaminomethyl-S-(2E)-geranyl-thiouridine(34) in tRNA + selenophosphate + H(+) = 5-methylaminomethyl-2-(Se-phospho)selenouridine(34) in tRNA + (2E)-thiogeraniol. The catalysed reaction is 5-methylaminomethyl-2-(Se-phospho)selenouridine(34) in tRNA + H2O = 5-methylaminomethyl-2-selenouridine(34) in tRNA + phosphate. Its function is as follows. Involved in the post-transcriptional modification of the uridine at the wobble position (U34) of tRNA(Lys), tRNA(Glu) and tRNA(Gln). Catalyzes the conversion of 2-thiouridine (S2U-RNA) to 2-selenouridine (Se2U-RNA). Acts in a two-step process involving geranylation of 2-thiouridine (S2U) to S-geranyl-2-thiouridine (geS2U) and subsequent selenation of the latter derivative to 2-selenouridine (Se2U) in the tRNA chain. This is tRNA 2-selenouridine synthase from Escherichia coli (strain 55989 / EAEC).